The sequence spans 346 residues: Nitrilase 1 (346 aa).

N-acetylserine is present on serine 2. In terms of domain architecture, CN hydrolase spans 25 to 297 (VRVTIVQSST…EGLVTADIDL (273 aa)). Glutamate 65 serves as the catalytic Proton acceptor. The active-site Proton donor is the lysine 152. Catalysis depends on cysteine 186, which acts as the Nucleophile.

It belongs to the carbon-nitrogen hydrolase superfamily. Nitrilase family. In terms of assembly, interacts with DEK3. As to expression, expressed in cotyledons, hypocotyls, leaves, roots, stems, flowers and siliques.

The catalysed reaction is a nitrile + 2 H2O = a carboxylate + NH4(+). Its function is as follows. Can convert indole-3-acetonitrile to the plant hormone indole-3-acetic acid. This is Nitrilase 1 from Arabidopsis thaliana (Mouse-ear cress).